The following is a 205-amino-acid chain: Small ribosomal subunit protein uS5 (205 aa).

Positions 49–112 (LEDEVLDIAM…TKAKMNLVKV (64 aa)) constitute an S5 DRBM domain.

Belongs to the universal ribosomal protein uS5 family. Part of the 30S ribosomal subunit. Contacts protein S4.

With S4 and S12 plays an important role in translational accuracy. The protein is Small ribosomal subunit protein uS5 of Methanoregula boonei (strain DSM 21154 / JCM 14090 / 6A8).